The primary structure comprises 372 residues: Queuine tRNA-ribosyltransferase (372 aa).

The Proton acceptor role is filled by aspartate 89. Substrate is bound by residues 89–93 (DSGGF), aspartate 161, and glycine 232. Positions 262–268 (GIGDLPS) are RNA binding. Aspartate 281 acts as the Nucleophile in catalysis. The interval 286-290 (TKAAR) is RNA binding; important for wobble base 34 recognition. 4 residues coordinate Zn(2+): cysteine 319, cysteine 321, cysteine 324, and histidine 351.

The protein belongs to the queuine tRNA-ribosyltransferase family. As to quaternary structure, homodimer. Within each dimer, one monomer is responsible for RNA recognition and catalysis, while the other monomer binds to the replacement base PreQ1. Zn(2+) serves as cofactor.

The catalysed reaction is 7-aminomethyl-7-carbaguanine + guanosine(34) in tRNA = 7-aminomethyl-7-carbaguanosine(34) in tRNA + guanine. It participates in tRNA modification; tRNA-queuosine biosynthesis. In terms of biological role, catalyzes the base-exchange of a guanine (G) residue with the queuine precursor 7-aminomethyl-7-deazaguanine (PreQ1) at position 34 (anticodon wobble position) in tRNAs with GU(N) anticodons (tRNA-Asp, -Asn, -His and -Tyr). Catalysis occurs through a double-displacement mechanism. The nucleophile active site attacks the C1' of nucleotide 34 to detach the guanine base from the RNA, forming a covalent enzyme-RNA intermediate. The proton acceptor active site deprotonates the incoming PreQ1, allowing a nucleophilic attack on the C1' of the ribose to form the product. After dissociation, two additional enzymatic reactions on the tRNA convert PreQ1 to queuine (Q), resulting in the hypermodified nucleoside queuosine (7-(((4,5-cis-dihydroxy-2-cyclopenten-1-yl)amino)methyl)-7-deazaguanosine). The sequence is that of Queuine tRNA-ribosyltransferase from Chlamydia trachomatis serovar L2 (strain ATCC VR-902B / DSM 19102 / 434/Bu).